A 116-amino-acid polypeptide reads, in one-letter code: S-adenosylmethionine decarboxylase proenzyme (116 aa).

Ser-62 (schiff-base intermediate with substrate; via pyruvic acid) is an active-site residue. Ser-62 is modified (pyruvic acid (Ser); by autocatalysis). The active-site Proton acceptor; for processing activity is His-67. The Proton donor; for catalytic activity role is filled by Cys-82.

The protein belongs to the prokaryotic AdoMetDC family. Type 1 subfamily. As to quaternary structure, heterotetramer of two alpha and two beta chains arranged as a dimer of alpha/beta heterodimers. It depends on pyruvate as a cofactor. Is synthesized initially as an inactive proenzyme. Formation of the active enzyme involves a self-maturation process in which the active site pyruvoyl group is generated from an internal serine residue via an autocatalytic post-translational modification. Two non-identical subunits are generated from the proenzyme in this reaction, and the pyruvate is formed at the N-terminus of the alpha chain, which is derived from the carboxyl end of the proenzyme. The post-translation cleavage follows an unusual pathway, termed non-hydrolytic serinolysis, in which the side chain hydroxyl group of the serine supplies its oxygen atom to form the C-terminus of the beta chain, while the remainder of the serine residue undergoes an oxidative deamination to produce ammonia and the pyruvoyl group blocking the N-terminus of the alpha chain.

It carries out the reaction S-adenosyl-L-methionine + H(+) = S-adenosyl 3-(methylsulfanyl)propylamine + CO2. The protein operates within amine and polyamine biosynthesis; S-adenosylmethioninamine biosynthesis; S-adenosylmethioninamine from S-adenosyl-L-methionine: step 1/1. Catalyzes the decarboxylation of S-adenosylmethionine to S-adenosylmethioninamine (dcAdoMet), the propylamine donor required for the synthesis of the polyamines spermine and spermidine from the diamine putrescine. This is S-adenosylmethionine decarboxylase proenzyme from Thermomicrobium roseum (strain ATCC 27502 / DSM 5159 / P-2).